We begin with the raw amino-acid sequence, 193 residues long: MKLLEERILKDGHILDDNILKVDSFLTHQVDFSLMREIGKVFAEKFAATGITKVVTIEASGIAPAVFTAEALNVPMIFAKKAKNITMNEGILTAQVYSFTKQVTSTVSIAGKFLSPEDKVLIIDDFLANGQAAKGLIQIIEQAGATVQAIGIVIEKSFQDGRDLLEKAGYPVLSLARLDRFENGQVVFKEADL.

Xanthine contacts are provided by Leu-20 and Thr-27. Residue 128-132 participates in 5-phospho-alpha-D-ribose 1-diphosphate binding; it reads ANGQA. Lys-156 is a binding site for xanthine.

The protein belongs to the purine/pyrimidine phosphoribosyltransferase family. Xpt subfamily. In terms of assembly, homodimer.

The protein localises to the cytoplasm. The catalysed reaction is XMP + diphosphate = xanthine + 5-phospho-alpha-D-ribose 1-diphosphate. It participates in purine metabolism; XMP biosynthesis via salvage pathway; XMP from xanthine: step 1/1. Converts the preformed base xanthine, a product of nucleic acid breakdown, to xanthosine 5'-monophosphate (XMP), so it can be reused for RNA or DNA synthesis. This chain is Xanthine phosphoribosyltransferase, found in Streptococcus pneumoniae serotype 2 (strain D39 / NCTC 7466).